Consider the following 338-residue polypeptide: Phosphate acyltransferase (338 aa).

This sequence belongs to the PlsX family. In terms of assembly, homodimer. Probably interacts with PlsY.

Its subcellular location is the cytoplasm. The catalysed reaction is a fatty acyl-[ACP] + phosphate = an acyl phosphate + holo-[ACP]. It functions in the pathway lipid metabolism; phospholipid metabolism. Catalyzes the reversible formation of acyl-phosphate (acyl-PO(4)) from acyl-[acyl-carrier-protein] (acyl-ACP). This enzyme utilizes acyl-ACP as fatty acyl donor, but not acyl-CoA. The protein is Phosphate acyltransferase of Gloeobacter violaceus (strain ATCC 29082 / PCC 7421).